The following is a 727-amino-acid chain: Broad-complex core protein isoforms 1/2/3/4/5 (727 aa).

Positions 32 to 97 (VDVTLACEGR…IYHGEVNVHQ (66 aa)) constitute a BTB domain. A compositionally biased stretch (polar residues) spans 135-149 (NSGGRTPLNTHTQSL). Disordered stretches follow at residues 135–185 (NSGG…SLPS), 218–378 (RGSD…IGDG), 445–496 (INNS…RPTA), 532–583 (PQQQ…ANTP), and 604–626 (STSG…SGGL). A compositionally biased stretch (low complexity) spans 227–238 (SGAVGSGSNNNS). The span at 281 to 298 (TGNGNSGNGNGNGNGASN) shows a compositional bias: gly residues. The span at 341 to 355 (NDEHSNDSTGEHDAN) shows a compositional bias: basic and acidic residues. 3 stretches are compositionally biased toward low complexity: residues 445–460 (INNS…NNNN), 475–495 (TPSP…TRPT), and 533–568 (QQQQ…QQQQ). 2 consecutive C2H2-type zinc fingers follow at residues 636–659 (FRCN…QNVH) and 666–689 (PVCN…SIYH). The segment at 694–727 (QPKQEPGVGATQAAANSFYHQQHQQQQLNHHSSS) is disordered. Residues 713–727 (HQQHQQQQLNHHSSS) are compositionally biased toward low complexity.

It is found in the nucleus. Its function is as follows. Broad-complex proteins are required for puffing and transcription of salivary gland late genes during metamorphosis. In Drosophila melanogaster (Fruit fly), this protein is Broad-complex core protein isoforms 1/2/3/4/5 (br).